Reading from the N-terminus, the 619-residue chain is Dihydroxy-acid dehydratase (619 aa).

D81 contributes to the Mg(2+) binding site. C122 lines the [2Fe-2S] cluster pocket. Residues D123 and K124 each coordinate Mg(2+). K124 carries the post-translational modification N6-carboxylysine. [2Fe-2S] cluster is bound at residue C195. Residue E492 participates in Mg(2+) binding. S518 (proton acceptor) is an active-site residue.

Belongs to the IlvD/Edd family. As to quaternary structure, homodimer. The cofactor is [2Fe-2S] cluster. Mg(2+) is required as a cofactor.

The catalysed reaction is (2R)-2,3-dihydroxy-3-methylbutanoate = 3-methyl-2-oxobutanoate + H2O. It catalyses the reaction (2R,3R)-2,3-dihydroxy-3-methylpentanoate = (S)-3-methyl-2-oxopentanoate + H2O. It functions in the pathway amino-acid biosynthesis; L-isoleucine biosynthesis; L-isoleucine from 2-oxobutanoate: step 3/4. It participates in amino-acid biosynthesis; L-valine biosynthesis; L-valine from pyruvate: step 3/4. Functionally, functions in the biosynthesis of branched-chain amino acids. Catalyzes the dehydration of (2R,3R)-2,3-dihydroxy-3-methylpentanoate (2,3-dihydroxy-3-methylvalerate) into 2-oxo-3-methylpentanoate (2-oxo-3-methylvalerate) and of (2R)-2,3-dihydroxy-3-methylbutanoate (2,3-dihydroxyisovalerate) into 2-oxo-3-methylbutanoate (2-oxoisovalerate), the penultimate precursor to L-isoleucine and L-valine, respectively. In Synechococcus elongatus (strain ATCC 33912 / PCC 7942 / FACHB-805) (Anacystis nidulans R2), this protein is Dihydroxy-acid dehydratase.